The following is a 380-amino-acid chain: Cytochrome b (380 aa).

The next 4 helical transmembrane spans lie at 33 to 53 (FGSL…FLAM), 77 to 98 (WLIR…YLHI), 113 to 133 (WNVG…GYVL), and 178 to 198 (FFAF…LHLL). Heme b contacts are provided by His83 and His97. Positions 182 and 196 each coordinate heme b. Residue His201 participates in a ubiquinone binding. A run of 4 helical transmembrane segments spans residues 226-246 (YKDL…ALFS), 288-308 (LGGV…PFLH), 320-340 (ASQF…WIGG), and 347-367 (FIII…VLFP).

The protein belongs to the cytochrome b family. In terms of assembly, the cytochrome bc1 complex contains 3 respiratory subunits (MT-CYB, CYC1 and UQCRFS1), 2 core proteins (UQCRC1 and UQCRC2) and probably 6 low-molecular weight proteins. It depends on heme b as a cofactor.

The protein resides in the mitochondrion inner membrane. Its function is as follows. Component of the ubiquinol-cytochrome c reductase complex (complex III or cytochrome b-c1 complex) that is part of the mitochondrial respiratory chain. The b-c1 complex mediates electron transfer from ubiquinol to cytochrome c. Contributes to the generation of a proton gradient across the mitochondrial membrane that is then used for ATP synthesis. The protein is Cytochrome b (mt-cyb) of Scomber scombrus (Atlantic mackerel).